A 323-amino-acid chain; its full sequence is Acetyl-coenzyme A carboxylase carboxyl transferase subunit alpha (323 aa).

In terms of domain architecture, CoA carboxyltransferase C-terminal spans 39 to 293 (RLSKKSQQLT…RRALADSLRQ (255 aa)).

Belongs to the AccA family. In terms of assembly, acetyl-CoA carboxylase is a heterohexamer composed of biotin carboxyl carrier protein (AccB), biotin carboxylase (AccC) and two subunits each of ACCase subunit alpha (AccA) and ACCase subunit beta (AccD).

The protein localises to the cytoplasm. The catalysed reaction is N(6)-carboxybiotinyl-L-lysyl-[protein] + acetyl-CoA = N(6)-biotinyl-L-lysyl-[protein] + malonyl-CoA. The protein operates within lipid metabolism; malonyl-CoA biosynthesis; malonyl-CoA from acetyl-CoA: step 1/1. In terms of biological role, component of the acetyl coenzyme A carboxylase (ACC) complex. First, biotin carboxylase catalyzes the carboxylation of biotin on its carrier protein (BCCP) and then the CO(2) group is transferred by the carboxyltransferase to acetyl-CoA to form malonyl-CoA. This Burkholderia lata (strain ATCC 17760 / DSM 23089 / LMG 22485 / NCIMB 9086 / R18194 / 383) protein is Acetyl-coenzyme A carboxylase carboxyl transferase subunit alpha.